The sequence spans 475 residues: ATP-dependent protease ATPase subunit HslU1 (475 aa).

The transit peptide at 1-27 (MMRRVTSSLPSALKLGRSLGPNVRFSG) directs the protein to the mitochondrion. ATP is bound by residues isoleucine 66, 108–113 (GVGKTE), aspartate 286, glutamate 353, and arginine 425.

The protein belongs to the ClpX chaperone family. HslU subfamily. As to quaternary structure, a double ring-shaped homohexamer of HslV is capped on each side by a ring-shaped HslU homohexamer. The assembly of the HslU/HslV complex (HslVU) is dependent on binding of ATP.

It is found in the mitochondrion matrix. Its subcellular location is the kinetoplast. Functionally, ATPase subunit of a proteasome-like degradation complex; this subunit has chaperone activity. The binding of ATP and its subsequent hydrolysis by HslU are essential for unfolding of protein substrates subsequently hydrolyzed by HslV. HslU recognizes the N-terminal part of its protein substrates and unfolds these before they are guided to HslV for hydrolysis. The HslVU protease complex functions in mitochondrial DNA replication by regulating DNA helicase PIF2 protein levels. In Trypanosoma brucei brucei (strain 927/4 GUTat10.1), this protein is ATP-dependent protease ATPase subunit HslU1 (HslU1).